A 220-amino-acid polypeptide reads, in one-letter code: 5-hmdU DNA kinase 1 (220 aa).

Belongs to the thymidylate kinase family. 5-hmdU DNA kinase subfamily.

The enzyme catalyses 5-hydroxymethyl-dUMP in DNA + ATP = 5-phosphomethyl-dUMP in DNA + ADP + H(+). In terms of biological role, phosphorylates 5-hydroxymethyluracil (5hmdU) into 5-phosphomethyl-2'-deoxyuridine (5- PmdU) on DNA as a step in the pathway leading to thymidine hypermodifications in the viral genome. The phosphate is added internally to the DNA polymer. As a final result of the pathway of hypermodification, 5-aminoethoxy-2'-deoxymethyluridine (5-NeOmdU) substitutes for about 40% of the thymidines in the viral DNA. These modifications probably prevent degradation of viral genome by the host restriction-modification antiviral defense system. The chain is 5-hmdU DNA kinase 1 from Salmonella phage ViI.